The primary structure comprises 409 residues: N-acetylglucosamine-6-phosphate deacetylase (409 aa).

Glu-143 contributes to the a divalent metal cation binding site. 154 to 155 (AH) serves as a coordination point for substrate. The a divalent metal cation site is built by His-211 and His-232. Substrate-binding positions include 235–236 (NA), Arg-243, and 269–272 (DGIH). Asp-294 acts as the Proton donor/acceptor in catalysis. 328–330 (LSG) serves as a coordination point for substrate.

It belongs to the metallo-dependent hydrolases superfamily. NagA family. A divalent metal cation serves as cofactor.

The enzyme catalyses N-acetyl-D-glucosamine 6-phosphate + H2O = D-glucosamine 6-phosphate + acetate. It functions in the pathway amino-sugar metabolism; N-acetylneuraminate degradation. In terms of biological role, hydrolyzes the N-glycolyl group from N-glycolylglucosamine 6-phosphate (GlcNGc-6-P) in the N-glycolylneuraminic acid (Neu5Gc) degradation pathway. This Rattus norvegicus (Rat) protein is N-acetylglucosamine-6-phosphate deacetylase (Amdhd2).